Here is a 702-residue protein sequence, read N- to C-terminus: Elongation factor G (702 aa).

Positions 8–286 (DKVRNIGIIA…AVVEYLPSPL (279 aa)) constitute a tr-type G domain. Residues 17 to 24 (AHIDAGKT), 85 to 89 (DTPGH), and 139 to 142 (NKMD) each bind GTP.

It belongs to the TRAFAC class translation factor GTPase superfamily. Classic translation factor GTPase family. EF-G/EF-2 subfamily.

The protein resides in the cytoplasm. Catalyzes the GTP-dependent ribosomal translocation step during translation elongation. During this step, the ribosome changes from the pre-translocational (PRE) to the post-translocational (POST) state as the newly formed A-site-bound peptidyl-tRNA and P-site-bound deacylated tRNA move to the P and E sites, respectively. Catalyzes the coordinated movement of the two tRNA molecules, the mRNA and conformational changes in the ribosome. This chain is Elongation factor G, found in Chloroflexus aggregans (strain MD-66 / DSM 9485).